A 357-amino-acid chain; its full sequence is MDAPRINKWLKPLSALYGVGVRLRNYLFDKNVLISNSFDIPIVCVGNITIGGTGKTPHVEYLIRLLHPRYRVAVVSRGYKRKTKGMIVATEGSTAWDIGDEPRQIKRKYPDLTVIVDADRSRAIGYLCDLAEEQRPQLIVLDDGFQHRKVKADLNIVLTDYNRILTKDYLLPAGRLREPAGSIQRADMVILTKCPDDLAPIDLRAAKRDLALYPHQKLFFSKFLYGQGLKPLFSDQSPSAEVRSALAIAGIASPKLFFREIRTRFPSGTDRIYPDHHEFTDREICLLIQDWHELHRKDANAIVVCTEKDAMRLALRQSSFPQEMQERFYYLPVEVKLMFDQEKVFVDRLLGVIQHKK.

49-56 (TIGGTGKT) is a binding site for ATP.

Belongs to the LpxK family.

It catalyses the reaction a lipid A disaccharide + ATP = a lipid IVA + ADP + H(+). It functions in the pathway glycolipid biosynthesis; lipid IV(A) biosynthesis; lipid IV(A) from (3R)-3-hydroxytetradecanoyl-[acyl-carrier-protein] and UDP-N-acetyl-alpha-D-glucosamine: step 6/6. Functionally, transfers the gamma-phosphate of ATP to the 4'-position of a tetraacyldisaccharide 1-phosphate intermediate (termed DS-1-P) to form tetraacyldisaccharide 1,4'-bis-phosphate (lipid IVA). The protein is Tetraacyldisaccharide 4'-kinase of Porphyromonas gingivalis (strain ATCC BAA-308 / W83).